A 267-amino-acid polypeptide reads, in one-letter code: Translation initiation factor 2 subunit alpha (267 aa).

Positions 17–88 (GEIVIGTVKR…KRGHIDLSIK (72 aa)) constitute an S1 motif domain.

This sequence belongs to the eIF-2-alpha family. As to quaternary structure, heterotrimer composed of an alpha, a beta and a gamma chain.

Functionally, eIF-2 functions in the early steps of protein synthesis by forming a ternary complex with GTP and initiator tRNA. The chain is Translation initiation factor 2 subunit alpha (eif2a) from Archaeoglobus fulgidus (strain ATCC 49558 / DSM 4304 / JCM 9628 / NBRC 100126 / VC-16).